We begin with the raw amino-acid sequence, 445 residues long: Trigger factor (445 aa).

Residues 162-247 (GDQVTIDAIG…IKAVHTAEPT (86 aa)) enclose the PPIase FKBP-type domain.

It belongs to the FKBP-type PPIase family. Tig subfamily.

It is found in the cytoplasm. The enzyme catalyses [protein]-peptidylproline (omega=180) = [protein]-peptidylproline (omega=0). Its function is as follows. Involved in protein export. Acts as a chaperone by maintaining the newly synthesized protein in an open conformation. Functions as a peptidyl-prolyl cis-trans isomerase. This chain is Trigger factor, found in Rickettsia rickettsii (strain Sheila Smith).